Reading from the N-terminus, the 336-residue chain is Phenylalanine--tRNA ligase alpha subunit (336 aa).

A Mg(2+)-binding site is contributed by Glu251.

It belongs to the class-II aminoacyl-tRNA synthetase family. Phe-tRNA synthetase alpha subunit type 1 subfamily. As to quaternary structure, tetramer of two alpha and two beta subunits. Requires Mg(2+) as cofactor.

The protein localises to the cytoplasm. It catalyses the reaction tRNA(Phe) + L-phenylalanine + ATP = L-phenylalanyl-tRNA(Phe) + AMP + diphosphate + H(+). The protein is Phenylalanine--tRNA ligase alpha subunit of Syntrophobacter fumaroxidans (strain DSM 10017 / MPOB).